The primary structure comprises 352 residues: Heat-inducible transcription repressor HrcA (352 aa).

It belongs to the HrcA family.

Negative regulator of class I heat shock genes (grpE-dnaK-dnaJ and groELS operons). Prevents heat-shock induction of these operons. This is Heat-inducible transcription repressor HrcA from Latilactobacillus sakei (Lactobacillus sakei).